Reading from the N-terminus, the 148-residue chain is MRLNDVKPQKGSKKRRRRVGRGISAGQGASAGLGMRGQKSRSGSGTRPGFEGGQQPLYRRIPKLKGFPVVNRKIYTTINVEKLADLPANTEVTLESLRAAGILTAAKGPLKILGNGDLGVALNVKAAAFTGQARSKIEAAGGSCEVLG.

A disordered region spans residues Met1–Leu57. Basic residues predominate over residues Lys10–Gly20. A compositionally biased stretch (gly residues) spans Ile23–Met35.

The protein belongs to the universal ribosomal protein uL15 family. In terms of assembly, part of the 50S ribosomal subunit.

Binds to the 23S rRNA. In Nostoc sp. (strain PCC 7120 / SAG 25.82 / UTEX 2576), this protein is Large ribosomal subunit protein uL15.